Here is a 600-residue protein sequence, read N- to C-terminus: Phosphoenolpyruvate carboxykinase (ATP) (600 aa).

ATP is bound at residue 302–309 (GLSGTGKT).

This sequence belongs to the phosphoenolpyruvate carboxykinase (ATP) family.

The catalysed reaction is oxaloacetate + ATP = phosphoenolpyruvate + ADP + CO2. Its pathway is carbohydrate biosynthesis; gluconeogenesis. This chain is Phosphoenolpyruvate carboxykinase (ATP) (acuF), found in Emericella nidulans (strain FGSC A4 / ATCC 38163 / CBS 112.46 / NRRL 194 / M139) (Aspergillus nidulans).